The sequence spans 173 residues: NADH-ubiquinone oxidoreductase chain 6 (173 aa).

The next 5 membrane-spanning stretches (helical) occupy residues 1–21 (MTYF…AVAS), 27–47 (YGVV…LSLG), 48–68 (VSFV…VVFV), 87–107 (VVGY…VGGF), and 139–159 (CGVG…FVVL).

It belongs to the complex I subunit 6 family.

The protein localises to the mitochondrion membrane. The catalysed reaction is a ubiquinone + NADH + 5 H(+)(in) = a ubiquinol + NAD(+) + 4 H(+)(out). Functionally, core subunit of the mitochondrial membrane respiratory chain NADH dehydrogenase (Complex I) that is believed to belong to the minimal assembly required for catalysis. Complex I functions in the transfer of electrons from NADH to the respiratory chain. The immediate electron acceptor for the enzyme is believed to be ubiquinone. The chain is NADH-ubiquinone oxidoreductase chain 6 (MT-ND6) from Aethia pygmaea (Whiskered auklet).